The chain runs to 583 residues: Potassium-transporting ATPase potassium-binding subunit (583 aa).

Transmembrane regions (helical) follow at residues 3-23 (NIIWQCLLYLSLLTALAWPLG), 66-86 (MACVIAFSAVSLVALTALLMA), 135-155 (GLTVQNFVSAAVGIAVLFALI), 177-197 (VLYILLPLSLVMSLLLIEQGV), 266-286 (LEMLALLLIPAALCFTFGAKI), 293-313 (VAIFAAMFILLTSAVSFTVQA), 402-422 (GLYGMLAFVLLTVFLAGLMVG), 440-460 (AVVVCLTTPVVILAGGGLMCL), 506-526 (VLLGVLMLAGRFAPIAAILAM), and 549-569 (LFIFLLIFVILLVGALSFFPA).

This sequence belongs to the KdpA family. In terms of assembly, the system is composed of three essential subunits: KdpA, KdpB and KdpC.

The protein localises to the cell inner membrane. In terms of biological role, part of the high-affinity ATP-driven potassium transport (or Kdp) system, which catalyzes the hydrolysis of ATP coupled with the electrogenic transport of potassium into the cytoplasm. This subunit binds the periplasmic potassium ions and delivers the ions to the membrane domain of KdpB through an intramembrane tunnel. This Desulfovibrio desulfuricans (strain ATCC 27774 / DSM 6949 / MB) protein is Potassium-transporting ATPase potassium-binding subunit.